A 350-amino-acid chain; its full sequence is Glycosyltransferase 8 domain-containing protein 2 (350 aa).

Topologically, residues 1-6 are cytoplasmic; sequence MALLRK. The helical; Signal-anchor for type II membrane protein transmembrane segment at 7 to 24 threads the bilayer; it reads INQVLLFLLIVTLCGILY. At 25–349 the chain is on the lumenal side; sequence KKVHKGTMLR…AGIFKLHHPN (325 aa). The N-linked (GlcNAc...) asparagine glycan is linked to asparagine 234.

Belongs to the glycosyltransferase 8 family.

It localises to the membrane. This Bos taurus (Bovine) protein is Glycosyltransferase 8 domain-containing protein 2 (GLT8D2).